The following is a 756-amino-acid chain: Receptor-like protein 3 (756 aa).

The N-terminal stretch at 1 to 50 (MTNEGRFKAKGFVRTSSTTRPIQALSFHMIGILLQCVLFISVLSIAVSEA) is a signal peptide. An N-cap region spans residues 51 to 88 (LCNSQDRESLLWFSGNVSSSVSPLNWNPSIDCCSWEGI). The Extracellular portion of the chain corresponds to 51–725 (LCNSQDRESL…ADTEDEEELK (675 aa)). An N-linked (GlcNAc...) asparagine glycan is attached at Asn66. 18 LRR repeats span residues 95-119 (DSHI…VLRL), 120-143 (HHLS…FLSA), 145-169 (DQLK…TFRN), 174-199 (CFPI…IFMQ), 201-225 (TFDL…MCKS), 226-250 (SPQL…LGRC), 252-274 (KLSV…IYNL), 275-298 (SELE…ITHL), 299-322 (TKLK…IGQL), 323-346 (SRLQ…LANC), 348-370 (NLVK…DFSR), 371-395 (FQSL…VHSC), 397-419 (SLSA…VLEL), 420-443 (ESLS…GILQ), 445-471 (CRNL…LISS), 474-498 (FPNL…LIKL), 499-521 (KSLA…WLGT), and 522-546 (FPHL…LFQL). N-linked (GlcNAc...) asparagine glycans are attached at residues Asn126 and Asn169. N-linked (GlcNAc...) asparagine glycosylation is present at Asn208. Residues Asn262 and Asn273 are each glycosylated (N-linked (GlcNAc...) asparagine). N-linked (GlcNAc...) asparagine glycans are attached at residues Asn334 and Asn345. An N-linked (GlcNAc...) asparagine glycan is attached at Asn381. Asn434, Asn447, and Asn459 each carry an N-linked (GlcNAc...) asparagine glycan. The stretch at 548-569 (ALMSQKAYDATERNYLKLPVFV) is one LRR 19; degenerate repeat. LRR repeat units follow at residues 570 to 593 (SPNN…IYIR), 608 to 631 (LKVL…ELSK), 632 to 656 (LTSL…LTSL), and 658 to 681 (YMSY…QFDT). A glycan (N-linked (GlcNAc...) asparagine) is linked at Asn573. Asn666 carries N-linked (GlcNAc...) asparagine glycosylation. Residues 699-725 (LTSCKASTKLPATTTNKADTEDEEELK) form a C-cap/acidic domain region. Residues 726-746 (FIFILGVATGFFVSYCFYWCF) traverse the membrane as a helical segment. The Cytoplasmic portion of the chain corresponds to 747-756 (FARLDAFISK).

Belongs to the RLP family. In terms of tissue distribution, expressed at very low levels in the shoot apex.

It is found in the cell membrane. Its function is as follows. Involved in the perception of CLV3 and CLV3-like peptides, that act as extracellular signals regulating meristems maintenance. Contributes, with WAKL22/RFO1, to resistance to F.oxysporum (f.) matthioli in cv. Columbia relative to cv. Ty-0. This is Receptor-like protein 3 from Arabidopsis thaliana (Mouse-ear cress).